We begin with the raw amino-acid sequence, 676 residues long: UvrABC system protein C (676 aa).

The region spanning 16-95 (VEPGVYRFRD…IKEFDPRFNI (80 aa)) is the GIY-YIG domain. A UVR domain is found at 208 to 243 (DRLVRDLERKMTAAAEDLDFERAARLRDDIGALRRA).

Belongs to the UvrC family. As to quaternary structure, interacts with UvrB in an incision complex.

The protein localises to the cytoplasm. Its function is as follows. The UvrABC repair system catalyzes the recognition and processing of DNA lesions. UvrC both incises the 5' and 3' sides of the lesion. The N-terminal half is responsible for the 3' incision and the C-terminal half is responsible for the 5' incision. This chain is UvrABC system protein C, found in Mycobacterium sp. (strain JLS).